Consider the following 347-residue polypeptide: Melanoma-associated antigen B1 (347 aa).

Residues 1–17 (MPRGQKSKLRAREKRRK) are compositionally biased toward basic residues. Positions 1–104 (MPRGQKSKLR…QATTSTESSV (104 aa)) are disordered. Composition is skewed to polar residues over residues 39–53 (PSSS…TSSP) and 89–102 (ENAS…STES). Residues 108-307 (VAWEAGMLMH…RDFPSHYEEA (200 aa)) form the MAGE domain. The tract at residues 315–347 (AQVRSSVRARRRTTATTFRARSRAPFSRSSHPM) is disordered. Over residues 328 to 347 (TATTFRARSRAPFSRSSHPM) the composition is skewed to low complexity.

As to expression, expressed only in testis.

The protein is Melanoma-associated antigen B1 (MAGEB1) of Homo sapiens (Human).